A 177-amino-acid chain; its full sequence is MLDAFSRVVVNSDAKAAYVGGSDLQALKKFIADGNKRLDSVNAIVSNASCIVSDAVSGMICENPGLIAPGGNCYTNRRMAACLRDGEIILRYVSYALLAGDPSVLEDRCLNGLKETYIALGVPTNSSVRAVSIMKAAAVAFITNTASQRKMATADGDCSALASEVASYCDRVAAAIS.

2 residues coordinate phycourobilin: C50 and C61. N72 is subject to N4-methylasparagine. Residues C82 and C158 each contribute to the (2R,3E)-phycoerythrobilin site.

The protein belongs to the phycobiliprotein family. In terms of assembly, heterodimer of an alpha and a beta chain. Post-translationally, contains two covalently linked phycoerythrobilin chromophores and one covalently linked phycourobilin chromophore.

Its subcellular location is the plastid. It is found in the chloroplast thylakoid membrane. Functionally, light-harvesting photosynthetic bile pigment-protein from the phycobiliprotein complex. The chain is R-phycoerythrin beta chain (cpeB) from Pyropia haitanensis (Red seaweed).